The sequence spans 311 residues: Putative HTH-type transcriptional regulatory protein PTO0557 (311 aa).

In terms of domain architecture, HTH cro/C1-type spans 132 to 186 (MRRIRELKGYSVGYLSSKLGISRRSISLYESGSSATIDIYLKLEETLGEDLTKDI). The H-T-H motif DNA-binding region spans 143–162 (VGYLSSKLGISRRSISLYES).

The protein is Putative HTH-type transcriptional regulatory protein PTO0557 of Picrophilus torridus (strain ATCC 700027 / DSM 9790 / JCM 10055 / NBRC 100828 / KAW 2/3).